Consider the following 218-residue polypeptide: Small ribosomal subunit protein mS34 (218 aa).

The interval 180 to 218 (KNGDTSTEEPMLNVQRIRMEPWDYPAKQEDKGRAKGTPV) is disordered. A compositionally biased stretch (basic and acidic residues) spans 196–212 (IRMEPWDYPAKQEDKGR).

This sequence belongs to the mitochondrion-specific ribosomal protein mS34 family. As to quaternary structure, component of the mitochondrial small ribosomal subunit (mt-SSU). Mature mammalian 55S mitochondrial ribosomes consist of a small (28S) and a large (39S) subunit. The 28S small subunit contains a 12S ribosomal RNA (12S mt-rRNA) and 30 different proteins. The 39S large subunit contains a 16S rRNA (16S mt-rRNA), a copy of mitochondrial valine transfer RNA (mt-tRNA(Val)), which plays an integral structural role, and 52 different proteins.

It localises to the mitochondrion. Its function is as follows. Required for mitochondrial translation, plays a role in maintaining the stability of the small ribosomal subunit and the 12S rRNA that are required for mitoribosome formation. The protein is Small ribosomal subunit protein mS34 (MRPS34) of Homo sapiens (Human).